The sequence spans 293 residues: Protoheme IX farnesyltransferase (293 aa).

9 helical membrane passes run 9–29 (LIKPGIVLGNIISAISGFLLA), 38–58 (YIILMYMILGTTLVIASSCVL), 86–106 (FVKNSIIYAIILNTLGFLFLG), 111–131 (LLTILLTMIGFLVYIGIYSLW), 137–157 (IYSTIIGSISGSMPPIIGYCT), 167–187 (WLLFIAFSFWQIPHSYSITIF), 211–231 (IHMILCILIFTLANISLTVLG), 234–254 (SYTFLYIISIMSIFWLYTGWY), and 271–291 (ILSIVIITSLNVLLSLDSIFI).

This sequence belongs to the UbiA prenyltransferase family. Protoheme IX farnesyltransferase subfamily.

The protein localises to the cell inner membrane. The enzyme catalyses heme b + (2E,6E)-farnesyl diphosphate + H2O = Fe(II)-heme o + diphosphate. It functions in the pathway porphyrin-containing compound metabolism; heme O biosynthesis; heme O from protoheme: step 1/1. Its function is as follows. Converts heme B (protoheme IX) to heme O by substitution of the vinyl group on carbon 2 of heme B porphyrin ring with a hydroxyethyl farnesyl side group. This is Protoheme IX farnesyltransferase from Blochmanniella floridana.